Here is a 357-residue protein sequence, read N- to C-terminus: Queuosine-tRNA galactosyltransferase (357 aa).

It belongs to the glycosyltransferase 2 family.

Its subcellular location is the cytoplasm. It carries out the reaction queuosine(34) in tRNA(Tyr) + UDP-alpha-D-galactose = O-5''-beta-D-galactosylqueuosine(34) in tRNA(Tyr) + UDP + H(+). In terms of biological role, glycosyltransferase that specifically catalyzes galactosylation of cytoplasmic tRNA(Tyr) modified with queuosine at position 34 (queuosine(34)). Galactosylates the cyclopentene hydroxyl group of queuosine(34) in tRNA(Tyr) to form galactosyl-queuosine(34). Mannosylation of queuosine(34) in tRNA(Tyr) is required to slow-down elongation at cognate codons UAC and suppress stop codon readthrough, thereby regulating protein translation. This is Queuosine-tRNA galactosyltransferase from Mus musculus (Mouse).